Reading from the N-terminus, the 185-residue chain is Intraflagellar transport protein 22 homolog (185 aa).

Residues 10-17 (GPCESGKT), 63-67 (DCGGD), and 123-126 (HKPG) each bind GTP. The residue at position 137 (serine 137) is a Phosphoserine.

Belongs to the small GTPase superfamily. Rab family. In terms of assembly, component of the IFT complex B, at least composed of IFT20, IFT22, IFT25, IFT27, IFT46, IFT52, TRAF3IP1/IFT54, IFT57, IFT74, IFT80, IFT81, and IFT88. Interacts with IFT88. Interacts with CFAP61.

It is found in the cell projection. It localises to the cilium. In terms of biological role, small GTPase-like component of the intraflagellar transport (IFT) complex B. This Rattus norvegicus (Rat) protein is Intraflagellar transport protein 22 homolog (Ift22).